A 234-amino-acid polypeptide reads, in one-letter code: uncharacterized protein (234 aa).

LRR repeat units follow at residues 44-63, 64-84, 85-107, and 111-134; these read LEFLSKINGGLTSISDLPKL, KLRKLELRVSGGLEVLAEKCP, NLTHLYLSGNKIKDLSTIEPLKQ, and LKSLDLFNCEVTNLNDYGENVFKL. A disordered region spans residues 161 to 234; it reads EGLDDEEEGE…GEEERGQKRK (74 aa). Positions 163-226 are enriched in acidic residues; it reads LDDEEEGEHE…GEEDEEELGE (64 aa).

Belongs to the ANP32 family. As to expression, expressed in activated stem cells, such as mobilized CD34+ cells and cord blood CD34+ cells, but not in resting bone marrow CD34+ cells. Expressed in a variety of neoplastic cell lines, mainly in prostatic adenocarcinoma cell lines. Not expressed in normal prostatic tissue.

This is an uncharacterized protein from Homo sapiens (Human).